Consider the following 218-residue polypeptide: Attacin-B (218 aa).

The signal sequence occupies residues 1–17 (MQKTSILILALFAIAEA). Positions 18-28 (VPTTGPIRVRR) are excised as a propeptide.

Belongs to the attacin/sarcotoxin-2 family. In terms of tissue distribution, hemolymph (at protein level).

The protein resides in the secreted. Functionally, hemolymph antibacterial protein. This chain is Attacin-B (AttB), found in Drosophila melanogaster (Fruit fly).